The sequence spans 364 residues: Flavonoid 3'-O-methyltransferase 3 (364 aa).

S-adenosyl-L-methionine is bound at residue D232. H270 acts as the Proton acceptor in catalysis.

The protein belongs to the class I-like SAM-binding methyltransferase superfamily. Cation-independent O-methyltransferase family. As to quaternary structure, homodimer.

The catalysed reaction is quercetin + S-adenosyl-L-methionine = isorhamnetin + S-adenosyl-L-homocysteine + H(+). It catalyses the reaction luteolin + S-adenosyl-L-methionine = chrysoeriol + S-adenosyl-L-homocysteine + H(+). It carries out the reaction a 3'-hydroxyflavone + S-adenosyl-L-methionine = a 3'-methoxyflavone + S-adenosyl-L-homocysteine + H(+). The enzyme catalyses rhamnetin + S-adenosyl-L-methionine = rhamnacene + S-adenosyl-L-homocysteine + H(+). The catalysed reaction is 3',4',7,8-tetrahydroxyflavone + S-adenosyl-L-methionine = 4',7,8-trihydroxy-3'-methoxyflavone-7-olate + S-adenosyl-L-homocysteine + H(+). It catalyses the reaction taxifolin + S-adenosyl-L-methionine = taxifolin 3'-methyl ether + S-adenosyl-L-homocysteine + H(+). It functions in the pathway flavonoid metabolism. Flavonoid 3'-O-methyltransferase involved in the biosynthesis of polymethoxylated flavonoids natural products such as pebrellin, aroma compounds which contribute to the flavor of peppermint, and exhibit pharmacological activities such as anti-allergic, anti-oxidant, antibacterial, anti-proliferative, and anti-inflammatory effects. Catalyzes S-adenosylmethionine-dependent regioselective 3'-O-methylation of flavonoids; active on various hydroxylated flavonoid substrates, including quercetin, rhamnetin, luteolin (LUT), 7,8,3'4'-tetrahydroxy-flavone and taxifolin, and, with a lower efficiency, eupatorin and hesperetin. This chain is Flavonoid 3'-O-methyltransferase 3, found in Mentha piperita (Peppermint).